Reading from the N-terminus, the 199-residue chain is Recombination protein RecR (199 aa).

Residues 56 to 71 (CQVCFHLSAESTCEIC) form a C4-type zinc finger. The Toprim domain occupies 79 to 173 (QTLCVVADSR…KVTRIAFGLP (95 aa)).

The protein belongs to the RecR family.

In terms of biological role, may play a role in DNA repair. It seems to be involved in an RecBC-independent recombinational process of DNA repair. It may act with RecF and RecO. The polypeptide is Recombination protein RecR (Gloeothece citriformis (strain PCC 7424) (Cyanothece sp. (strain PCC 7424))).